The chain runs to 160 residues: Protein CrtK (160 aa).

5 helical membrane-spanning segments follow: residues 3–23 (LTLF…GAIF), 37–57 (WVPP…LMSI), 76–96 (LAFW…FFGL), 101–121 (GGML…VLFW), and 129–149 (LMFV…FSVW).

Belongs to the TspO/BZRP family.

It localises to the cell inner membrane. Its pathway is carotenoid biosynthesis; spheroidene biosynthesis. In Rhodobacter capsulatus (strain ATCC BAA-309 / NBRC 16581 / SB1003), this protein is Protein CrtK (crtK).